Here is a 347-residue protein sequence, read N- to C-terminus: Phenylalanine--tRNA ligase alpha subunit (347 aa).

A Mg(2+)-binding site is contributed by Glu-262.

It belongs to the class-II aminoacyl-tRNA synthetase family. Phe-tRNA synthetase alpha subunit type 1 subfamily. As to quaternary structure, tetramer of two alpha and two beta subunits. The cofactor is Mg(2+).

The protein resides in the cytoplasm. The catalysed reaction is tRNA(Phe) + L-phenylalanine + ATP = L-phenylalanyl-tRNA(Phe) + AMP + diphosphate + H(+). The protein is Phenylalanine--tRNA ligase alpha subunit of Roseiflexus castenholzii (strain DSM 13941 / HLO8).